The primary structure comprises 250 residues: ATP synthase subunit a (250 aa).

The next 6 helical transmembrane spans lie at alanine 29–serine 49, phenylalanine 84–valine 104, isoleucine 114–isoleucine 134, leucine 143–isoleucine 163, isoleucine 185–isoleucine 205, and alanine 208–leucine 228.

This sequence belongs to the ATPase A chain family. In terms of assembly, F-type ATPases have 2 components, CF(1) - the catalytic core - and CF(0) - the membrane proton channel. CF(1) has five subunits: alpha(3), beta(3), gamma(1), delta(1), epsilon(1). CF(0) has three main subunits: a(1), b(2) and c(9-12). The alpha and beta chains form an alternating ring which encloses part of the gamma chain. CF(1) is attached to CF(0) by a central stalk formed by the gamma and epsilon chains, while a peripheral stalk is formed by the delta and b chains.

The protein localises to the cell inner membrane. Its function is as follows. Key component of the proton channel; it plays a direct role in the translocation of protons across the membrane. The chain is ATP synthase subunit a from Rhizobium rhizogenes (strain K84 / ATCC BAA-868) (Agrobacterium radiobacter).